Consider the following 356-residue polypeptide: Zinc finger protein 830 (356 aa).

The stretch at 11–33 (AQEELRKLMKAKQRESSSKKRIE) forms a coiled coil. Residues 47–69 (CVVCNSLIKSELLWPAHILGKQH) form a C2H2-type zinc finger. Residues 71-195 (EKVAELKGTK…PTSSADNLPA (125 aa)) are disordered. A compositionally biased stretch (polar residues) spans 80 to 90 (KATTSSPSNTI). 2 stretches are compositionally biased toward basic and acidic residues: residues 99-118 (KGSEPEKQESKRTKGSEDHP) and 125-135 (LPEEFFEKEKT). Acidic residues predominate over residues 150-165 (DYEDVDDDDAEEGEEY). Residues 278-322 (AEEDEEGRLDRQIDEIDEQIQCYRRVEHLRDRKDTLQDAKMEVLK) are a coiled coil.

It is found in the nucleus. It localises to the chromosome. Its subcellular location is the nucleus speckle. Its function is as follows. May act as an important regulator of the cell cycle that participates in the maintenance of genome integrity. The sequence is that of Zinc finger protein 830 from Xenopus laevis (African clawed frog).